A 271-amino-acid chain; its full sequence is Calretinin (271 aa).

6 consecutive EF-hand domains span residues 16-51 (LTAS…LEKA), 63-98 (NFGE…EENF), 107-142 (GSSA…LLKK), 151-186 (KLQE…QENF), 195-230 (LTSE…LYEK), and 235-270 (MNIQ…SEPP). The Ca(2+) site is built by Asp-29, Asp-31, Asn-33, Tyr-35, Glu-40, Asp-76, Asn-78, Asp-80, Lys-82, Glu-87, Asp-120, Asp-122, Ser-124, Tyr-126, Glu-131, Asp-164, Asn-166, Asp-168, Lys-170, Glu-175, Asp-208, Asp-210, Ser-212, Tyr-214, and Glu-219. Tyr-214 carries the post-translational modification Phosphotyrosine.

It belongs to the calbindin family. In terms of tissue distribution, brain.

The protein localises to the synapse. It is found in the cell projection. It localises to the dendrite. Its function is as follows. Calcium-binding protein involved in calcium homeostasis and signal transduction. It plays a critical role in buffering intracellular calcium levels and modulating calcium-dependent signaling pathways. Predominantly expressed in specific neuronal populations, influences synaptic plasticity and neuronal excitability, contributing to learning and memory. During embryonic development, it facilitates neuronal differentiation and maturation. This Homo sapiens (Human) protein is Calretinin.